The chain runs to 88 residues: Small ribosomal subunit protein bS20 (88 aa).

The protein belongs to the bacterial ribosomal protein bS20 family.

In terms of biological role, binds directly to 16S ribosomal RNA. This chain is Small ribosomal subunit protein bS20, found in Bartonella quintana (strain Toulouse) (Rochalimaea quintana).